The chain runs to 178 residues: Large ribosomal subunit protein eL20 (178 aa).

Belongs to the eukaryotic ribosomal protein eL20 family.

The chain is Large ribosomal subunit protein eL20 (RPL18A) from Castanea sativa (Sweet chestnut).